The primary structure comprises 276 residues: Pantothenate synthetase (276 aa).

27–34 (MGALHKGH) contacts ATP. His34 serves as the catalytic Proton donor. Gln58 is a (R)-pantoate binding site. Residue Gln58 coordinates beta-alanine. 147 to 150 (GKKD) provides a ligand contact to ATP. Gln153 lines the (R)-pantoate pocket. Residues Val176 and 184-187 (LSSR) contribute to the ATP site.

The protein belongs to the pantothenate synthetase family. In terms of assembly, homodimer.

The protein localises to the cytoplasm. The catalysed reaction is (R)-pantoate + beta-alanine + ATP = (R)-pantothenate + AMP + diphosphate + H(+). It participates in cofactor biosynthesis; (R)-pantothenate biosynthesis; (R)-pantothenate from (R)-pantoate and beta-alanine: step 1/1. In terms of biological role, catalyzes the condensation of pantoate with beta-alanine in an ATP-dependent reaction via a pantoyl-adenylate intermediate. The chain is Pantothenate synthetase from Helicobacter acinonychis (strain Sheeba).